A 68-amino-acid polypeptide reads, in one-letter code: Guanine nucleotide-binding protein G(I)/G(S)/G(O) subunit gamma-5 (68 aa).

Residue serine 2 is modified to N-acetylserine. The residue at position 2 (serine 2) is a Phosphoserine. Residue cysteine 65 is modified to Cysteine methyl ester. The S-geranylgeranyl cysteine moiety is linked to residue cysteine 65. Residues 66–68 (SFL) constitute a propeptide, removed in mature form.

The protein belongs to the G protein gamma family. G proteins are composed of 3 units, alpha, beta and gamma. As to expression, expressed in a variety of tissues.

Its subcellular location is the cell membrane. Functionally, guanine nucleotide-binding proteins (G proteins) are involved as a modulator or transducer in various transmembrane signaling systems. The beta and gamma chains are required for the GTPase activity, for replacement of GDP by GTP, and for G protein-effector interaction. This is Guanine nucleotide-binding protein G(I)/G(S)/G(O) subunit gamma-5 (GNG5) from Bos taurus (Bovine).